We begin with the raw amino-acid sequence, 247 residues long: ATP synthase subunit a, plastid (247 aa).

Helical transmembrane passes span 33–53, 95–115, 134–154, 199–219, and 220–240; these read FLVH…LLGS, VPFI…GALL, INTT…AGIL, LVVV…VMLL, and GLFT…AYIG.

It belongs to the ATPase A chain family. In terms of assembly, F-type ATPases have 2 components, CF(1) - the catalytic core - and CF(0) - the membrane proton channel. CF(1) has five subunits: alpha(3), beta(3), gamma(1), delta(1), epsilon(1). CF(0) has four main subunits: a, b, b' and c.

It localises to the plastid membrane. Functionally, key component of the proton channel; it plays a direct role in the translocation of protons across the membrane. This chain is ATP synthase subunit a, plastid, found in Cuscuta exaltata (Tall dodder).